Consider the following 841-residue polypeptide: pre-rRNA 2'-O-ribose RNA methyltransferase FTSJ3 (841 aa).

5 residues coordinate S-adenosyl-L-methionine: Gly-56, Trp-58, Asp-76, Asp-92, and Asp-117. Residue Lys-157 is the Proton acceptor of the active site. Residues 332-366 (ISLSSGEEDEGNEEDSTAGTTEQPSKEEEEEEQLN) are disordered. A phosphoserine mark is found at Ser-333, Ser-335, Ser-336, Ser-347, and Ser-356. The segment covering 337–347 (GEEDEGNEEDS) has biased composition (acidic residues). A coiled-coil region spans residues 356 to 404 (SKEEEEEEQLNQTLAEMKAQEVAELKRKKKKLLREQRKQRERVELKMDL). A Glycyl lysine isopeptide (Lys-Gly) (interchain with G-Cter in SUMO2) cross-link involves residue Lys-357. Citrulline is present on Arg-389. The disordered stretch occupies residues 454–482 (VSDVEDDGDDTSLDSDLDPEELAGVRGHQ). The segment covering 456–474 (DVEDDGDDTSLDSDLDPEE) has biased composition (acidic residues). Ser-547 bears the Phosphoserine mark. At Thr-567 the chain carries Phosphothreonine. Lys-573 participates in a covalent cross-link: Glycyl lysine isopeptide (Lys-Gly) (interchain with G-Cter in SUMO2). A Phosphoserine modification is found at Ser-578. A disordered region spans residues 579 to 654 (PLYQDEAPKG…IVPIEDPAKH (76 aa)). A Glycyl lysine isopeptide (Lys-Gly) (interchain with G-Cter in SUMO2) cross-link involves residue Lys-637. Ser-638 carries the phosphoserine modification. Lys-653 participates in a covalent cross-link: Glycyl lysine isopeptide (Lys-Gly) (interchain with G-Cter in SUMO2). Ser-670 is modified (phosphoserine). Residue Lys-672 forms a Glycyl lysine isopeptide (Lys-Gly) (interchain with G-Cter in SUMO2) linkage. Ser-682 carries the phosphoserine modification. Residue Lys-704 forms a Glycyl lysine isopeptide (Lys-Gly) (interchain with G-Cter in SUMO2) linkage. Residues 733 to 771 (IKKVAEAKARKKRRMLKRLEQTRKKAEAVVNTVDISERE) are a coiled coil. Arg-777 carries the citrulline modification. Basic residues predominate over residues 805–815 (VRRPAGVRGHF). Residues 805–841 (VRRPAGVRGHFKVVDSRMKKDQRAQQRKEQKKKHKRK) are disordered. A compositionally biased stretch (basic and acidic residues) spans 816–832 (KVVDSRMKKDQRAQQRK).

This sequence belongs to the class I-like SAM-binding methyltransferase superfamily. RNA methyltransferase RlmE family. SPB1 subfamily. In terms of assembly, interacts with NIP7. In terms of processing, citrullinated by PADI4.

Its subcellular location is the nucleus. It is found in the nucleolus. The enzyme catalyses a ribonucleotide in rRNA + S-adenosyl-L-methionine = a 2'-O-methylribonucleotide in rRNA + S-adenosyl-L-homocysteine + H(+). Functionally, RNA 2'-O-methyltransferase involved in the processing of the 34S pre-rRNA to 18S rRNA and in 40S ribosomal subunit formation. The sequence is that of pre-rRNA 2'-O-ribose RNA methyltransferase FTSJ3 from Pongo abelii (Sumatran orangutan).